The primary structure comprises 513 residues: ATP synthase subunit alpha (513 aa).

169–176 (GDRQTGKT) serves as a coordination point for ATP.

Belongs to the ATPase alpha/beta chains family. As to quaternary structure, F-type ATPases have 2 components, CF(1) - the catalytic core - and CF(0) - the membrane proton channel. CF(1) has five subunits: alpha(3), beta(3), gamma(1), delta(1), epsilon(1). CF(0) has three main subunits: a(1), b(2) and c(9-12). The alpha and beta chains form an alternating ring which encloses part of the gamma chain. CF(1) is attached to CF(0) by a central stalk formed by the gamma and epsilon chains, while a peripheral stalk is formed by the delta and b chains.

It localises to the cell inner membrane. It carries out the reaction ATP + H2O + 4 H(+)(in) = ADP + phosphate + 5 H(+)(out). Its function is as follows. Produces ATP from ADP in the presence of a proton gradient across the membrane. The alpha chain is a regulatory subunit. The protein is ATP synthase subunit alpha of Shewanella loihica (strain ATCC BAA-1088 / PV-4).